Here is a 345-residue protein sequence, read N- to C-terminus: Anthranilate phosphoribosyltransferase (345 aa).

5-phospho-alpha-D-ribose 1-diphosphate contacts are provided by residues Gly84, Gly87–Asp88, Thr92, Asn94–Thr97, Lys112–Ser120, and Ser124. Gly84 contributes to the anthranilate binding site. Position 96 (Ser96) interacts with Mg(2+). Arg170 serves as a coordination point for anthranilate. Mg(2+) contacts are provided by Asp229 and Glu230.

This sequence belongs to the anthranilate phosphoribosyltransferase family. In terms of assembly, homodimer. Mg(2+) is required as a cofactor.

The catalysed reaction is N-(5-phospho-beta-D-ribosyl)anthranilate + diphosphate = 5-phospho-alpha-D-ribose 1-diphosphate + anthranilate. It functions in the pathway amino-acid biosynthesis; L-tryptophan biosynthesis; L-tryptophan from chorismate: step 2/5. Its function is as follows. Catalyzes the transfer of the phosphoribosyl group of 5-phosphorylribose-1-pyrophosphate (PRPP) to anthranilate to yield N-(5'-phosphoribosyl)-anthranilate (PRA). This Herminiimonas arsenicoxydans protein is Anthranilate phosphoribosyltransferase.